A 558-amino-acid chain; its full sequence is Atlastin-1 (558 aa).

A disordered region spans residues 1–27 (MAKNRRDRNSWGGFSEKTYEWSSEEEE). Residues 1 to 34 (MAKNRRDRNSWGGFSEKTYEWSSEEEEPVKKAGP) form an N-terminal hypervariable region (HVR) region. Over 1-449 (MAKNRRDRNS…NIFHAARTPA (449 aa)) the chain is Cytoplasmic. A phosphoserine mark is found at S10, S22, and S23. Positions 64–309 (DKEVVAVSVA…LIPWLLSPES (246 aa)) constitute a GB1/RHD3-type G domain. Residues R77, K78, G79, K80, S81, F82, Q148, R217, D218, V276, and N279 each contribute to the GDP site. The GTP site is built by R77, K78, G79, K80, S81, and F82. S81 serves as a coordination point for Mg(2+). GTP contacts are provided by R217, D218, and V276. The segment at 347–438 (MLQATAEANN…YIQYIKHNDS (92 aa)) is 3HB (three-helix bundle) domain. Residue K395 is modified to N6-acetyllysine. Residues 412–439 (EFSRRYLQQLESEIDELYIQYIKHNDSK) are a coiled coil. A linker region spans residues 439–447 (KNIFHAART). The helical transmembrane segment at 450-470 (TLFVVIFITYVIAGVTGFIGL) threads the bilayer. Residue D471 is a topological domain, lumenal. The helical transmembrane segment at 472 to 492 (IIASLCNMIMGLTLITLCTWA) threads the bilayer. Residues 493-558 (YIRYSGEYRE…STEQSEKKKM (66 aa)) lie on the Cytoplasmic side of the membrane. Positions 521-558 (NEALYKLYSAAATHRHLYHQAFPTPKSESTEQSEKKKM) are autoinhibitory domain.

It belongs to the TRAFAC class dynamin-like GTPase superfamily. GB1/RHD3 GTPase family. GB1 subfamily. As to quaternary structure, monomeric and homodimeric. The homodimer, transiently formed by two molecules on opposing membranes, is the active form mediating ER membrane fusion. Interacts with REEP1, REEP5, RTN3 and RTN4 (via the transmembrane region); these proteins are involved in endoplasmic reticulum tubular network organization. Interacts with ZFYVE27; both proteins are involved in endoplasmic reticulum tubular network organization. Interacts with ARL6IP1; both proteins are involved in endoplasmic reticulum tubular network organization. Interacts with SPAST; the interaction is direct, could recruit SPAST to Golgi membranes. Interacts (via N-terminal region) with MAP4K4 (via CNH regulatory domain). May interact with TMED2. Interacts with CPT1C. Phosphorylated. Phosphorylation, by different kinases, of the N-terminal hypervariable region (HVR) regulates the ATL1-mediated membrane tethering step.

It localises to the endoplasmic reticulum membrane. The protein localises to the golgi apparatus membrane. Its subcellular location is the cell projection. It is found in the axon. The enzyme catalyses GTP + H2O = GDP + phosphate + H(+). Functionally, atlastin-1 (ATL1) is a membrane-anchored GTPase that mediates the GTP-dependent fusion of endoplasmic reticulum (ER) membranes, maintaining the continuous ER network. It facilitates the formation of three-way junctions where ER tubules intersect. Two atlastin-1 on neighboring ER tubules bind GTP and form loose homodimers through the GB1/RHD3-type G domains and 3HB regions. Upon GTP hydrolysis, the 3HB regions tighten, pulling the membranes together to drive their fusion. After fusion, the homodimer disassembles upon release of inorganic phosphate (Pi). Subsequently, GDP dissociates, resetting the monomers to a conformation ready for a new fusion cycle. May also regulate more or less directly Golgi biogenesis. Indirectly regulates axonal development. The sequence is that of Atlastin-1 from Pongo abelii (Sumatran orangutan).